Reading from the N-terminus, the 301-residue chain is Oxygen-dependent coproporphyrinogen-III oxidase (301 aa).

Ser-92 contributes to the substrate binding site. Positions 96 and 106 each coordinate a divalent metal cation. His-106 (proton donor) is an active-site residue. Residue 108-110 (NVR) participates in substrate binding. His-145 and His-175 together coordinate a divalent metal cation. Positions 240–275 (YVEFNLVWDRGTLFGLQTGGRTESILMSMPPLVRWE) are important for dimerization. 258-260 (GGR) lines the substrate pocket.

It belongs to the aerobic coproporphyrinogen-III oxidase family. Homodimer. A divalent metal cation serves as cofactor.

The protein localises to the cytoplasm. It carries out the reaction coproporphyrinogen III + O2 + 2 H(+) = protoporphyrinogen IX + 2 CO2 + 2 H2O. It functions in the pathway porphyrin-containing compound metabolism; protoporphyrin-IX biosynthesis; protoporphyrinogen-IX from coproporphyrinogen-III (O2 route): step 1/1. Functionally, involved in the heme biosynthesis. Catalyzes the aerobic oxidative decarboxylation of propionate groups of rings A and B of coproporphyrinogen-III to yield the vinyl groups in protoporphyrinogen-IX. The chain is Oxygen-dependent coproporphyrinogen-III oxidase from Cronobacter sakazakii (strain ATCC BAA-894) (Enterobacter sakazakii).